The following is a 90-amino-acid chain: Lectin-1 (90 aa).

Residue Q1 is modified to Pyrrolidone carboxylic acid. A disulfide bond links C46 and C71.

In terms of processing, the N-terminus is blocked. Post-translationally, contains seven disulfide bonds. Proteolytically cleaved. Major form may consist of cleaved, disulfide-bonded subunits.

Lectin with specificity for complex N-linked glycans and O-linked glycans. Has hemagglutinating activity towards rabbit erythrocytes that is inhibited by N-acetyl-D-galactosamine. The sequence is that of Lectin-1 from Hypnea cervicornis (Brazilian red alga).